We begin with the raw amino-acid sequence, 315 residues long: tRNA dimethylallyltransferase (315 aa).

10–17 (GPTATGKS) lines the ATP pocket. 12-17 (TATGKS) contributes to the substrate binding site. Residues 35–38 (DSMQ) are interaction with substrate tRNA.

It belongs to the IPP transferase family. Monomer. It depends on Mg(2+) as a cofactor.

The enzyme catalyses adenosine(37) in tRNA + dimethylallyl diphosphate = N(6)-dimethylallyladenosine(37) in tRNA + diphosphate. Functionally, catalyzes the transfer of a dimethylallyl group onto the adenine at position 37 in tRNAs that read codons beginning with uridine, leading to the formation of N6-(dimethylallyl)adenosine (i(6)A). The sequence is that of tRNA dimethylallyltransferase from Caldanaerobacter subterraneus subsp. tengcongensis (strain DSM 15242 / JCM 11007 / NBRC 100824 / MB4) (Thermoanaerobacter tengcongensis).